The chain runs to 92 residues: Small ribosomal subunit protein uS19c (92 aa).

Belongs to the universal ribosomal protein uS19 family.

It is found in the plastid. It localises to the chloroplast. Its function is as follows. Protein S19 forms a complex with S13 that binds strongly to the 16S ribosomal RNA. This chain is Small ribosomal subunit protein uS19c, found in Lobularia maritima (Sweet alyssum).